Here is a 122-residue protein sequence, read N- to C-terminus: Small ribosomal subunit protein uS13 (122 aa).

The interval Arg99–Lys122 is disordered.

This sequence belongs to the universal ribosomal protein uS13 family. Part of the 30S ribosomal subunit. Forms a loose heterodimer with protein S19. Forms two bridges to the 50S subunit in the 70S ribosome.

Functionally, located at the top of the head of the 30S subunit, it contacts several helices of the 16S rRNA. In the 70S ribosome it contacts the 23S rRNA (bridge B1a) and protein L5 of the 50S subunit (bridge B1b), connecting the 2 subunits; these bridges are implicated in subunit movement. Contacts the tRNAs in the A and P-sites. The protein is Small ribosomal subunit protein uS13 of Bradyrhizobium diazoefficiens (strain JCM 10833 / BCRC 13528 / IAM 13628 / NBRC 14792 / USDA 110).